Here is a 271-residue protein sequence, read N- to C-terminus: MLKIADTTFTSRLFTGTGKFSSPELMLEALRASGSQLITMAMKRVDLQSGNDAILAPLRQLGVRLLPNTSGAKTAEEAIFAARLAREALNTHWVKLEIHPDVRYLLPDPIETLKAAEVLVKEGFVVLPYCGADPVLCKRLEEVGCAAVMPLGSPIGSNLGLRTRDFLQIIIEQSKVPVVVDAGIGAPSHALEALELGADAVLVNTAIAVAHSPVQMAHAFRLAVESGERARLAGLGASPFNPSQPDTLQLRATATSPLTGFLSQLEEQEHV.

Lys-95 functions as the Schiff-base intermediate with DXP in the catalytic mechanism. 1-deoxy-D-xylulose 5-phosphate-binding positions include Gly-156, 182–183 (AG), and 204–205 (NT).

Belongs to the ThiG family. As to quaternary structure, homotetramer. Forms heterodimers with either ThiH or ThiS.

The protein localises to the cytoplasm. The catalysed reaction is [ThiS sulfur-carrier protein]-C-terminal-Gly-aminoethanethioate + 2-iminoacetate + 1-deoxy-D-xylulose 5-phosphate = [ThiS sulfur-carrier protein]-C-terminal Gly-Gly + 2-[(2R,5Z)-2-carboxy-4-methylthiazol-5(2H)-ylidene]ethyl phosphate + 2 H2O + H(+). Its pathway is cofactor biosynthesis; thiamine diphosphate biosynthesis. Catalyzes the rearrangement of 1-deoxy-D-xylulose 5-phosphate (DXP) to produce the thiazole phosphate moiety of thiamine. Sulfur is provided by the thiocarboxylate moiety of the carrier protein ThiS. In vitro, sulfur can be provided by H(2)S. The polypeptide is Thiazole synthase (Yersinia pseudotuberculosis serotype O:3 (strain YPIII)).